A 202-amino-acid chain; its full sequence is Josephin-1 (202 aa).

Phosphoserine is present on S15. Residues 23–202 form the Josephin domain; that stretch reads PPQIYHEKQR…EAHQSWRADV (180 aa). C36 functions as the Nucleophile in the catalytic mechanism. The active-site Proton acceptor is the H139.

Interacts with beta-actin/ACTB. In terms of processing, monoubiquitinated. Ubiquitination activates deubiquitination activity in vitro.

It is found in the cell membrane. The protein resides in the cytoplasm. The catalysed reaction is Thiol-dependent hydrolysis of ester, thioester, amide, peptide and isopeptide bonds formed by the C-terminal Gly of ubiquitin (a 76-residue protein attached to proteins as an intracellular targeting signal).. Functionally, deubiquitinates monoubiquitinated probes (in vitro). When ubiquitinated, cleaves 'Lys-63'-linked and 'Lys-48'-linked poly-ubiquitin chains (in vitro), hence may act as a deubiquitinating enzyme. May increase macropinocytosis and suppress clathrin- and caveolae-mediated endocytosis. May enhance membrane dynamics and cell motility independently of its catalytic activity. In Bos taurus (Bovine), this protein is Josephin-1 (JOSD1).